A 608-amino-acid chain; its full sequence is Threonine--tRNA ligase (608 aa).

Residues 1-143 (MRVLYIHAER…VFKPEEAKTE (143 aa)) are editing domain. Catalytic regions lie at residues 194 to 490 (PKYL…PRLP) and 195 to 490 (KYLD…PRLP). Positions 287, 338, and 459 each coordinate Zn(2+).

It belongs to the class-II aminoacyl-tRNA synthetase family. In terms of assembly, homodimer. It depends on Zn(2+) as a cofactor.

The protein resides in the cytoplasm. The enzyme catalyses tRNA(Thr) + L-threonine + ATP = L-threonyl-tRNA(Thr) + AMP + diphosphate + H(+). In terms of biological role, catalyzes the attachment of threonine to tRNA(Thr) in a two-step reaction: L-threonine is first activated by ATP to form Thr-AMP and then transferred to the acceptor end of tRNA(Thr). Also edits incorrectly charged L-seryl-tRNA(Thr). The chain is Threonine--tRNA ligase from Pyrobaculum arsenaticum (strain DSM 13514 / JCM 11321 / PZ6).